The primary structure comprises 492 residues: Alpha-2-antiplasmin (492 aa).

The first 22 residues, 1–22 (MALLWGLLALILSCLSSLCSAQ), serve as a signal peptide directing secretion. The propeptide occupies 23-40 (FSPVSTMEPLDLQLMDGQ). The disordered stretch occupies residues 56 to 76 (QEPGGQIAPKKAPEDCKLSPT). Cysteine 71 and cysteine 144 are oxidised to a cystine. Asparagine 127, asparagine 249, asparagine 296, asparagine 310, and asparagine 317 each carry an N-linked (GlcNAc...) asparagine glycan. The interval 433 to 492 (SVRNPNPGAQPERKEQQDSPDGKDSFQDHKGLPRGDKPFDPDLKLGPPSEEDYAQPSSPK) is disordered. Basic and acidic residues predominate over residues 443–475 (PERKEQQDSPDGKDSFQDHKGLPRGDKPFDPDL). Tyrosine 485 is modified (sulfotyrosine).

This sequence belongs to the serpin family. As to quaternary structure, forms protease inhibiting heterodimer with TMPRSS7. Post-translationally, proteolytically cleaved at Pro-31 by both the prolyl endopeptidase FAP form and antiplasmin-cleaving enzyme FAP soluble form to generate mature alpha-2-antiplasmin. As to expression, expressed by the liver and secreted in plasma.

It is found in the secreted. Functionally, serine protease inhibitor. The major targets of this inhibitor are plasmin and trypsin, but it also inactivates matriptase-3/TMPRSS7 and chymotrypsin. The protein is Alpha-2-antiplasmin (SERPINF2) of Bos taurus (Bovine).